A 542-amino-acid chain; its full sequence is Chaperonin GroEL 2 (542 aa).

ATP is bound by residues 29 to 32 (TLGP), 86 to 90 (DGTTT), G413, 477 to 479 (NAA), and D493.

The protein belongs to the chaperonin (HSP60) family. Forms a cylinder of 14 subunits composed of two heptameric rings stacked back-to-back. Interacts with the co-chaperonin GroES.

It is found in the cytoplasm. The enzyme catalyses ATP + H2O + a folded polypeptide = ADP + phosphate + an unfolded polypeptide.. Its function is as follows. Together with its co-chaperonin GroES, plays an essential role in assisting protein folding. The GroEL-GroES system forms a nano-cage that allows encapsulation of the non-native substrate proteins and provides a physical environment optimized to promote and accelerate protein folding. The polypeptide is Chaperonin GroEL 2 (Kineococcus radiotolerans (strain ATCC BAA-149 / DSM 14245 / SRS30216)).